A 22-amino-acid chain; its full sequence is Motilin (22 aa).

The interval 1 to 22 is disordered; it reads FVPIFTHSELQKIREKERNKGQ. The span at 9 to 22 shows a compositional bias: basic and acidic residues; sequence ELQKIREKERNKGQ.

It belongs to the motilin family.

The protein localises to the secreted. Functionally, plays an important role in the regulation of interdigestive gastrointestinal motility and indirectly causes rhythmic contraction of duodenal and colonic smooth muscle. In Canis lupus familiaris (Dog), this protein is Motilin (MLN).